We begin with the raw amino-acid sequence, 305 residues long: LysM and putative peptidoglycan-binding domain-containing protein 3 (305 aa).

The Extracellular portion of the chain corresponds to 1-221 (MTGRNQHNGF…PYYGADWGMR (221 aa)). Asn29 carries an N-linked (GlcNAc...) asparagine glycan. The disordered stretch occupies residues 31–60 (SETEYSEEDGEAFELRSRGRERHHRSTSRD). One can recognise a LysM domain in the interval 68–112 (LIREIKEGDTLISISLQYFCTVADIKRANNLLTEQDFFALRSLRI). Residues 121–144 (TETHNTAPHKSSSPSGTCRITETP) are compositionally biased toward polar residues. Residues 121 to 156 (TETHNTAPHKSSSPSGTCRITETPVSGASLDSTSSS) are disordered. Low complexity predominate over residues 146–156 (SGASLDSTSSS). A helical transmembrane segment spans residues 222–242 (WWTAVAIMLVVGIVTPVFYLL). Over 243-305 (YYEVLMKADV…QHHVKHQEET (63 aa)) the chain is Cytoplasmic.

The protein localises to the cell membrane. It localises to the golgi apparatus. In terms of biological role, essential for Golgi structural integrity. The chain is LysM and putative peptidoglycan-binding domain-containing protein 3 (lysmd3) from Danio rerio (Zebrafish).